A 184-amino-acid polypeptide reads, in one-letter code: ESX-1 secretion-associated protein EspD (184 aa).

Residues Ile33–Thr56 are disordered.

It is found in the secreted. Its function is as follows. Required for ESX-1 function. Required for the maintenance of adequate cellular levels of both EspA and EspC. Facilitates EsxA secretion. The chain is ESX-1 secretion-associated protein EspD from Mycobacterium tuberculosis (strain CDC 1551 / Oshkosh).